Consider the following 58-residue polypeptide: Arabinogalactan protein 21 (58 aa).

An N-terminal signal peptide occupies residues 1–24 (MEAMKMKMMVFIMVVAVAFSAATA). 4-hydroxyproline is present on residues Pro-30, Pro-32, and Pro-34. Residues Pro-30, Pro-32, and Pro-34 are each glycosylated (O-linked (Ara...) hydroxyproline). Ser-36 is lipidated: GPI-anchor amidated serine. The propeptide at 37 to 58 (DAAMFVPALFASVVALASGFIF) is removed in mature form.

This sequence belongs to the AG-peptide AGP family. Contains 4-hydroxyproline; hydroxylated on Pro-30, Pro-32 and Pro-34. In terms of processing, O-glycosylated on hydroxyprolines; noncontiguous hydroxylproline residues are glycosylated with arabinogalactan.

It is found in the cell membrane. Functionally, proteoglycan that seems to be implicated in diverse developmental roles such as differentiation, cell-cell recognition, embryogenesis and programmed cell death. The chain is Arabinogalactan protein 21 from Arabidopsis thaliana (Mouse-ear cress).